The primary structure comprises 494 residues: Regulatory protein E2 (494 aa).

The transactivation domain stretch occupies residues 1–201 (MENLSERFNV…ETVFAPVTSS (201 aa)). Residues 196-397 (APVTSSTPPG…RSLQSVSSKH (202 aa)) are disordered. The span at 221-236 (TSSDSTTRSSDKQSQQ) shows a compositional bias: low complexity. Residues 242–252 (KGYGRRPSSRT) show a composition bias toward basic residues. The segment covering 267-297 (RSQSNSRSRSQSQTRALGATSVSRSSRSPSV) has biased composition (low complexity). Basic residues-rich tracts occupy residues 301–313 (RNRR…RGRG) and 324–339 (KRRR…RKRS). Residues 340–351 (QRGERGRGERGG) are compositionally biased toward basic and acidic residues. A compositionally biased stretch (low complexity) spans 360–382 (SSTSPTPKRSRAGSRSSRQRGVS). The interval 410–494 (DPPVIICKGG…ETAYGNLDSL (85 aa)) is DNA-binding domain. A Glycyl lysine isopeptide (Lys-Gly) (interchain with G-Cter in SUMO) cross-link involves residue lysine 417.

The protein belongs to the papillomaviridae E2 protein family. As to quaternary structure, binds DNA as homodimer. Interacts with protein E1; this interaction greatly increases E1 DNA-binding activity. Interacts with protein L1; this interaction enhances E2-dependent replication and transcription activation. Interacts with protein L2; this interaction inhibits E2 transcriptional activity but not DNA replication function E2. Interacts with protein E7; this interaction inhibits E7 oncogenic activity. Interacts with host TAF1; this interaction modulates E2-dependent transcriptional regulation. Interacts with host BRD4; this interaction mediates E2 transcriptional activation function. Additionally, the interaction with host BRD4 on mitotic chromosomes mediates tethering of the viral genome. Interacts with host TOPBP1; this interaction is required for optimal viral DNA replication. Post-translationally, phosphorylated. Sumoylation plays a regulatory role in E2 transcriptional activity.

The protein localises to the host nucleus. Its function is as follows. Plays a role in the initiation of viral DNA replication. A dimer of E2 interacts with a dimer of E1 in order to improve specificity of E1 DNA binding activity. Once the complex recognizes and binds DNA at specific sites, the E2 dimer is removed from DNA. E2 also regulates viral transcription through binding to the E2RE response element (5'-ACCNNNNNNGGT-3') present in multiple copies in the regulatory regions of the viral genome. Activates or represses transcription depending on E2RE's position with regards to proximal promoter elements including the TATA-box. Repression occurs by sterically hindering the assembly of the transcription initiation complex. This Human papillomavirus 12 protein is Regulatory protein E2.